The primary structure comprises 461 residues: Secreted 45 kDa protein (461 aa).

Residues 1 to 27 (MKKKIISAILMSTVILSAAAPLSGVYA) form the signal peptide. Over residues 264 to 329 (SSASASSSQA…GNTNSGTSTG (66 aa)) the composition is skewed to low complexity. A disordered region spans residues 264–343 (SSASASSSQA…TTTGGSGINS (80 aa)). Positions 330-340 (NTGGTTTGGSG) are enriched in gly residues. Residues 330-459 (NTGGTTTGGS…VSASGVTFLM (130 aa)) form the Peptidase C51 domain.

The protein is Secreted 45 kDa protein (usp45) of Lactococcus lactis subsp. cremoris (strain MG1363).